A 1344-amino-acid polypeptide reads, in one-letter code: Centrosomal P4.1-associated protein (1344 aa).

2 disordered regions span residues S67–L123 and P187–V225. The segment covering S211 to V225 has biased composition (polar residues). S248 is modified (phosphoserine). Residues Q257–K300 are disordered. Basic and acidic residues-rich tracts occupy residues A259–P271 and R282–N297. The residue at position 304 (S304) is a Phosphoserine. The segment at V307 to K382 is alpha/beta-tubulin binding. 2 disordered regions span residues Q347–H407 and T425–D470. Over residues L388–Q398 the composition is skewed to polar residues. S528 bears the Phosphoserine mark. Phosphoserine; by PLK2 occurs at positions 577 and 583. Disordered regions lie at residues R600–S626 and T672–A735. Positions V709 to S720 are enriched in basic and acidic residues. S748 carries the phosphoserine modification. Residues Q887 to M1344 are interaction with STIL. The interval Q1105 to E1133 is disordered.

Belongs to the TCP10 family. In terms of assembly, forms homodimers. Associates with microtubules plus ends; binds to beta-tubulin subunits exposed on microtubule outer surface at its distal tip; also associates with microtubule lattice. Associated with the gamma-tubulin complex. Interacts with the head domain of EPB41. Interacts with LYST. Interacts with CEP152 (via C-terminus). Interacts with STIL. Forms a complex with STIL and SASS6. In terms of processing, phosphorylation at Ser-577 and Ser-583 by PLK2 is required for procentriole formation and centriole elongation. Phosphorylation by PLK2 oscillates during the cell cycle: it increases at G1/S transition and decreases during the exit from mitosis. Phosphorylation at Ser-583 is also mediated by PLK4 but is not a critical step in PLK4 function in procentriole assembly.

Its subcellular location is the cytoplasm. It is found in the cytoskeleton. The protein localises to the microtubule organizing center. The protein resides in the centrosome. It localises to the centriole. Its function is as follows. Plays an important role in cell division and centrosome function by participating in centriole duplication. Inhibits microtubule nucleation from the centrosome. Involved in the regulation of slow processive growth of centriolar microtubules. Acts as microtubule plus-end tracking protein that stabilizes centriolar microtubules and inhibits microtubule polymerization and extension from the distal ends of centrioles. Required for centriole elongation and for STIL-mediated centriole amplification. Required for the recruitment of CEP295 to the proximal end of new-born centrioles at the centriolar microtubule wall during early S phase in a PLK4-dependent manner. May be involved in the control of centriolar-microtubule growth by acting as a regulator of tubulin release. This Mus musculus (Mouse) protein is Centrosomal P4.1-associated protein (Cpap).